Here is a 427-residue protein sequence, read N- to C-terminus: Intermediate conductance calcium-activated potassium channel protein 4 (427 aa).

A helical membrane pass occupies residues 29–49 (ALVLAGTGIGLMVLHAEMLWF). The helical transmembrane segment at 59–79 (FLVKCTISISTFLLLCLIVAF) threads the bilayer. Residues 108–128 (IVLELVVCGLHPAPVRGPPCV) form a helical membrane-spanning segment. The chain crosses the membrane as a helical span at residues 143–163 (GFLGQGEALLSLAMLLRLYLV). The chain crosses the membrane as a helical span at residues 207–227 (LLLGLTLGLWLTTAWVLSVAE). An intramembrane region (pore-forming) is located at residues 241-261 (LWLIPITFLTIGYGDVVPGTM). A helical transmembrane segment spans residues 265–285 (IVCLCTGVMGVCCTALLVAVV). The calmodulin-binding stretch occupies residues 286–347 (ARKLEFNKAE…RRHQRKLLAA (62 aa)). Residue H358 is modified to Phosphohistidine.

Belongs to the potassium channel KCNN family. KCa3.1/KCNN4 subfamily. As to quaternary structure, homodimer. Homotetramer. Heterotetramer of potassium channel proteins. Interacts with MTMR6; this interaction leads to selective dephosphorylation of PI(3)P in a lipid microdomain adjacent to KCNN4, resulting in a decrease of intermediate conductance calcium-activated potassium channel activity. Interacts (via the C-tail domain) with CALM1; the calmodulin binding is constitutive, does not require calcium and mediates calcium-dependent gating and four calmodulin molecules bind to one channel tetramer. In terms of processing, phosphorylation at His-358 by NDKB activates the intermediate conductance calcium-activated potassium channel activity, and conversely it's dephosphorylation by PHPT1 inhibits this activity. Widely expressed in non-excitable tissues.

It is found in the cell membrane. Its subcellular location is the cell projection. The protein resides in the ruffle membrane. It carries out the reaction K(+)(in) = K(+)(out). Its activity is regulated as follows. The channel is inhibited by clotrimazole and charybdotoxin but is insensitive to apamin. Functionally, intermediate conductance calcium-activated potassium channel that mediates the voltage-independent transmembrane transfer of potassium across the cell membrane through a constitutive interaction with calmodulin which binds the intracellular calcium allowing its opening. The current is characterized by a voltage-independent activation, an intracellular calcium concentration increase-dependent activation and a single-channel conductance of about 25 picosiemens. Also presents an inwardly rectifying current, thus reducing its already small outward conductance of potassium ions, which is particularly the case when the membrane potential displays positive values, above + 20 mV. Controls calcium influx during vascular contractility by being responsible of membrane hyperpolarization induced by vasoactive factors in proliferative vascular smooth muscle cell types. Following calcium influx, the consecutive activation of KCNN4 channel leads to a hyperpolarization of the cell membrane potential and hence an increase of the electrical driving force for further calcium influx promoting sustained calcium entry in response to stimulation with chemotactic peptides. Required for maximal calcium influx and proliferation during the reactivation of naive T-cells. Plays a role in the late stages of EGF-induced macropinocytosis through activation by PI(3)P. This is Intermediate conductance calcium-activated potassium channel protein 4 from Homo sapiens (Human).